The following is a 1262-amino-acid chain: MQKAIRLNDGHVVTLGLLAQKDGTRKGYLSKRSADNPKWQTKWFALLQNLLFYFESDSSPRPSGLYLLEGSICKRAPSPKRGTSSKESGEKQQHYFTVNFSNDSQKTLELRTEDAKDCDEWVAAIARASYKILATEHEALMQKYLHLLQVVETEKTVAKQLRQQLEDGEVEIERLKTEVTITNLIKDNDRIQSSNKAGSADDEDSDIKKIKKVQSFLRGWLCRRKWKNIIQDYIRSPHADSMRKRNQVVFSMLEAEAEYVQQLHILVNNFLRPLRMAASSKKPPITHDDVSSIFLNSETIMFLHQIFYQGLKARISSWPTLVLADLFDILLPMLNIYQEFVRNHQYSLQILAHCKQNRDFDKLLKQYEAKPDCEERTLETFLTYPMFQIPRYILTLHELLAHTPHEHVERNSLDYAKSKLEELSRIMHDEVSETENIRKNLAIERMITEGCEILLDTSQTFVRQGSLMQMSLSEKSKSSRGRLGSLSTKKEGERQCFLFSKHLIICTRGSGGKLHLTKNGVISLIDCTLLDEPENLDDEAKGAGPEIEHLEFKIGVEPKDSLPFTVILVASTRQEKAAWTSDIIQCVDNIRCNGLMMNAFEENSKVTVPQMIKSDASLYCDDVDIRFSKTMNSCKVLQIRYASVERLLERLTDLRFLSIDFLNTFLHSYRVFTNAMVVLDKLINIYRKPMSAIPARSLELLFSSSHNAKLLYGDAPKSPRASRKFSSPPPLAIGTSSPSRRRKLSLNIPIITGGKALELASLGCSSDSYANIHSPISPFGKTTLDTGKLCMASSLPKTPEEIDVPATIPEKPGELSASRKHSSDVLKEESEDDQNHSDEDNTEVSPVKSPPTPKSFLNRTITEFPFFNYNNGILMTTCRDLVDNNRSTLSATSAFAIATAGANEGPSNKEVFRRMSLANTGFSSDQRNIDKEFVIRRAATNRVLNVLRHWVTKHTQDFDTDDTLKYRVICFLEEVMHDPDLLTQERKAAANIIRTLTLEETTEQHSMLEEVILMTEGVKTEPFENHPALEIAEQLTLLDHLVFKSIPYEEFFGQGWMKAEKYERTPYIMKTTKHFNHVSNFIASEIIRNEDISARASAIEKWVAVADICRCLHNYNAVLEITSSINRSAIFRLKKTWLKVSKQTKSLLDKLQKLVSSDGRFKNLRESLRNCDPPCVPYLGMYLTDLVFIEEGTPNYTEDGLVNFSKMRMISHIIREIRQFQQTTYKIDPQPKVIQYLLDESFMLDEESLYESSLLIEPKLPT.

A PH 1 domain is found at 22 to 130; it reads DGTRKGYLSK…WVAAIARASY (109 aa). A Phosphoserine; by PLK2 modification is found at Ser-71. One can recognise an IQ domain in the interval 208–233; it reads KKIKKVQSFLRGWLCRRKWKNIIQDY. The region spanning 244–430 is the DH domain; it reads KRNQVVFSML…EELSRIMHDE (187 aa). The PH 2 domain maps to 460 to 588; that stretch reads TFVRQGSLMQ…WTSDIIQCVD (129 aa). Residues Ser-581 and Ser-617 each carry the phosphoserine; by PLK2 modification. Residues 635 to 749 enclose the N-terminal Ras-GEF domain; the sequence is KVLQIRYASV…RRRKLSLNIP (115 aa). The disordered stretch occupies residues 714 to 738; sequence DAPKSPRASRKFSSPPPLAIGTSSP. Phosphoserine is present on Ser-745. At Ser-766 the chain carries Phosphoserine; by PLK2. The disordered stretch occupies residues 800 to 854; sequence EEIDVPATIPEKPGELSASRKHSSDVLKEESEDDQNHSDEDNTEVSPVKSPPTPK. Over residues 821–839 the composition is skewed to basic and acidic residues; sequence HSSDVLKEESEDDQNHSDE. In terms of domain architecture, Ras-GEF spans 1027 to 1259; the sequence is PALEIAEQLT…YESSLLIEPK (233 aa).

Homooligomer and heterooligomer with RASGRF2. Interacts with USP8, thereby regulating its stability. In terms of processing, phosphorylated by PLK2, leading to ubiquitination and degradation by the proteasome. Post-translationally, ubiquitinated and degraded following phosphorylation by PLK2. Phosphorylated by SRC and LCK. Phosphorylation by LCK increases its capacity to stimulate the GDP/GTP exchange on Ras, whereas its phosphorylation by SRC seems not to have an effect on stimulation activity. Brain.

Promotes the exchange of Ras-bound GDP by GTP. The protein is Ras-specific guanine nucleotide-releasing factor 1 (Rasgrf1) of Mus musculus (Mouse).